A 420-amino-acid polypeptide reads, in one-letter code: DNA repair protein RadA (420 aa).

62 to 69 (GDPGIGKS) serves as a coordination point for ATP. A RadA KNRFG motif motif is present at residues 218–222 (KNRFG). Residues 317–420 (DAYLKSAGGV…IQEVLKKVFA (104 aa)) form a lon-protease-like region.

The protein belongs to the RecA family. RadA subfamily.

In terms of biological role, plays a role in repairing double-strand DNA breaks, probably involving stabilizing or processing branched DNA or blocked replication forks. Required for efficient transformation with chromosomal (linear) DNA, but not for replicative plasmid DNA. Its increased sensitivity to a DNA damaging agent suggests it may be required for DNA repair. This is DNA repair protein RadA from Streptococcus pneumoniae (strain ATCC BAA-255 / R6).